Consider the following 506-residue polypeptide: Cobyric acid synthase (506 aa).

Residues 254-453 enclose the GATase cobBQ-type domain; the sequence is DLDIAVIRLP…IHGIFESDSF (200 aa). Cys-334 serves as the catalytic Nucleophile. The active site involves His-445.

The protein belongs to the CobB/CobQ family. CobQ subfamily.

Its pathway is cofactor biosynthesis; adenosylcobalamin biosynthesis. Catalyzes amidations at positions B, D, E, and G on adenosylcobyrinic A,C-diamide. NH(2) groups are provided by glutamine, and one molecule of ATP is hydrogenolyzed for each amidation. This chain is Cobyric acid synthase, found in Dehalococcoides mccartyi (strain ATCC BAA-2266 / KCTC 15142 / 195) (Dehalococcoides ethenogenes (strain 195)).